The primary structure comprises 561 residues: Magnesium-chelatase 60 kDa subunit (561 aa).

Disordered regions lie at residues 234-268 (PLQEAPPPPPPPPEPPEPNEGENQQDEQDQIDPLD) and 298-324 (RAASGGQGAGQEQIGNRRGRPLPSRKG). Over residues 237–249 (EAPPPPPPPPEPP) the composition is skewed to pro residues. Acidic residues predominate over residues 250-265 (EPNEGENQQDEQDQID). Basic residues predominate over residues 314–323 (RRGRPLPSRK). The 181-residue stretch at 379 to 559 (VLIFAVDASG…KMADVLGAAL (181 aa)) folds into the VWFA domain.

This sequence belongs to the Mg-chelatase subunits D/I family.

It carries out the reaction protoporphyrin IX + Mg(2+) + ATP + H2O = Mg-protoporphyrin IX + ADP + phosphate + 3 H(+). It participates in porphyrin-containing compound metabolism; bacteriochlorophyll biosynthesis. Functionally, involved in bacteriochlorophyll biosynthesis; introduces a magnesium ion into protoporphyrin IX to yield Mg-protoporphyrin IX. In Rhodobacter capsulatus (strain ATCC BAA-309 / NBRC 16581 / SB1003), this protein is Magnesium-chelatase 60 kDa subunit (bchD).